The sequence spans 141 residues: Nucleoside diphosphate kinase (141 aa).

Positions 11, 59, 87, 93, 104, and 114 each coordinate ATP. His-117 functions as the Pros-phosphohistidine intermediate in the catalytic mechanism.

This sequence belongs to the NDK family. In terms of assembly, homotetramer. It depends on Mg(2+) as a cofactor.

It is found in the cytoplasm. The catalysed reaction is a 2'-deoxyribonucleoside 5'-diphosphate + ATP = a 2'-deoxyribonucleoside 5'-triphosphate + ADP. It catalyses the reaction a ribonucleoside 5'-diphosphate + ATP = a ribonucleoside 5'-triphosphate + ADP. In terms of biological role, major role in the synthesis of nucleoside triphosphates other than ATP. The ATP gamma phosphate is transferred to the NDP beta phosphate via a ping-pong mechanism, using a phosphorylated active-site intermediate. The polypeptide is Nucleoside diphosphate kinase (Burkholderia thailandensis (strain ATCC 700388 / DSM 13276 / CCUG 48851 / CIP 106301 / E264)).